We begin with the raw amino-acid sequence, 1076 residues long: Isoleucine--tRNA ligase (1076 aa).

The 'HIGH' region signature appears at 47–57; the sequence is PYTTGQIHLGT. A 'KMSKS' region motif is present at residues 591 to 595; that stretch reads KMSKS. Residue Lys-594 coordinates ATP.

This sequence belongs to the class-I aminoacyl-tRNA synthetase family. IleS type 2 subfamily. In terms of assembly, monomer. It depends on Zn(2+) as a cofactor.

Its subcellular location is the cytoplasm. The catalysed reaction is tRNA(Ile) + L-isoleucine + ATP = L-isoleucyl-tRNA(Ile) + AMP + diphosphate. Its function is as follows. Catalyzes the attachment of isoleucine to tRNA(Ile). As IleRS can inadvertently accommodate and process structurally similar amino acids such as valine, to avoid such errors it has two additional distinct tRNA(Ile)-dependent editing activities. One activity is designated as 'pretransfer' editing and involves the hydrolysis of activated Val-AMP. The other activity is designated 'posttransfer' editing and involves deacylation of mischarged Val-tRNA(Ile). The polypeptide is Isoleucine--tRNA ligase (Methanoregula boonei (strain DSM 21154 / JCM 14090 / 6A8)).